Consider the following 146-residue polypeptide: Negative cofactor 2 complex subunit beta (146 aa).

The disordered stretch occupies residues 124–146 (FRQSRSRLHHNSVSDPVKSEDSS). Phosphoserine is present on residues serine 135, serine 137, and serine 142.

Component of the NC2 (negative cofactor 2) complex composed of BUR6 and NCB2. The NC2 complex associates with SPT15/TBP. Interacts with SPT15/TBP.

Its subcellular location is the nucleus. Component of the NC2 complex which represses RNA polymerase II transcription through binding to SPT15/TBP and thereby inhibiting the assembly of the preinitiation complex. The NC2 complex may also mediate transcriptional activation from TATA-driven promoters through association with SPT15/TBP. The polypeptide is Negative cofactor 2 complex subunit beta (NCB2) (Saccharomyces cerevisiae (strain ATCC 204508 / S288c) (Baker's yeast)).